The primary structure comprises 557 residues: Leucine-rich glioma-inactivated protein 1 (557 aa).

The signal sequence occupies residues 1–34 (MESESIRRMGNACIPLKRIAYFLCLFSVVLLTEG). Positions 35–72 (KKPAKPKCPAVCTCSKDNALCENARSIPRTVPPDVISL) constitute an LRRNT domain. LRR repeat units lie at residues 92–113 (SLQL…AFIG), 116–137 (HLEY…TFRG), and 140–161 (SLIH…IFKG). An LRRCT domain is found at 173–223 (NSFNCDCKLKWLVEWLGHTNATVEDIYCEGPPEYKKRKINSLSPKDFDCII). The N-linked (GlcNAc...) asparagine glycan is linked to Asn-192. EAR repeat units follow at residues 225–267 (EFAK…EWDH), 271–313 (TFRN…KRDG), 317–364 (KFIK…KWNG), 366–415 (GFYS…QWSK), 419–462 (LFIN…KWGG), 464–506 (SFQD…NWDA), and 510–552 (KFVK…KHVI). N-linked (GlcNAc...) asparagine glycosylation is present at Asn-277. N-linked (GlcNAc...) asparagine glycosylation is present at Asn-422.

As to quaternary structure, oligomer. Interacts with KCNA1 within a complex containing KCNA1, KCNA4 and KCNAB1. Can bind to ADAM11 and ADAM23. Part of a complex containing ADAM22, DLG4/PSD95 and CACNG2 (stargazin). Post-translationally, glycosylated. As to expression, expressed in brain. High levels found in hippocampus, thalamic nuclei, neocortex, and molecular and granule cell layers of the cerebellum.

It is found in the secreted. Its subcellular location is the synapse. It localises to the cytoplasm. In terms of biological role, plays a role in suppressing the production of MMP1/3 through the phosphatidylinositol 3-kinase/ERK pathway. Regulates voltage-gated potassium channels assembled from KCNA1, KCNA4 and KCNAB1. It slows down channel inactivation by precluding channel closure mediated by the KCNAB1 subunit. Ligand for ADAM22 that positively regulates synaptic transmission mediated by AMPA-type glutamate receptors. This chain is Leucine-rich glioma-inactivated protein 1 (Lgi1), found in Rattus norvegicus (Rat).